Here is a 262-residue protein sequence, read N- to C-terminus: Virulence regulon transcriptional activator VirF (262 aa).

Residues 161–258 (DQIRKIVEKN…GITPKKFYLY (98 aa)) form the HTH araC/xylS-type domain. 2 DNA-binding regions (H-T-H motif) span residues 178–199 (SDIS…ESEK) and 225–248 (INDV…NEYY).

Homodimer.

Functionally, primary regulator of plasmid-encoded virulence genes. Activates the transcription of icsA (virG) and of virB, which is an activator of the ipaABCD virulence regulon. This chain is Virulence regulon transcriptional activator VirF (virF), found in Shigella dysenteriae.